The chain runs to 344 residues: Putative voltage-gated potassium channel subunit beta (344 aa).

Positions 33, 62, 67, 167, 193, 222, 223, 224, 225, 233, 243, 301, 303, 307, 310, and 311 each coordinate NADP(+). The active-site Proton donor/acceptor is Tyr67.

It belongs to the shaker potassium channel beta subunit family. In terms of assembly, forms heteromultimeric complexes with potassium channel alpha subunits.

The protein localises to the cytoplasm. Its subcellular location is the nucleus. Functionally, probable accessory potassium channel protein which modulates the activity of the pore-forming alpha subunit. This is Putative voltage-gated potassium channel subunit beta from Schizosaccharomyces pombe (strain 972 / ATCC 24843) (Fission yeast).